Reading from the N-terminus, the 240-residue chain is Phosphoribosylaminoimidazole-succinocarboxamide synthase (240 aa).

The protein belongs to the SAICAR synthetase family.

The catalysed reaction is 5-amino-1-(5-phospho-D-ribosyl)imidazole-4-carboxylate + L-aspartate + ATP = (2S)-2-[5-amino-1-(5-phospho-beta-D-ribosyl)imidazole-4-carboxamido]succinate + ADP + phosphate + 2 H(+). The protein operates within purine metabolism; IMP biosynthesis via de novo pathway; 5-amino-1-(5-phospho-D-ribosyl)imidazole-4-carboxamide from 5-amino-1-(5-phospho-D-ribosyl)imidazole-4-carboxylate: step 1/2. This Wigglesworthia glossinidia brevipalpis protein is Phosphoribosylaminoimidazole-succinocarboxamide synthase.